Reading from the N-terminus, the 953-residue chain is Protein ENHANCER OF LHP1 1 (953 aa).

WD repeat units follow at residues 15-55, 60-99, 102-143, 144-183, 192-232, 236-275, and 277-316; these read GGSA…TLPP, HHQD…FQTN, RFTL…RVLK, GHKG…VSFT, GFNT…KLFA, DHLE…DIDR, and KFEE…SMLS. Disordered regions lie at residues 347–370, 385–419, and 851–877; these read SESL…RKRL, EELN…GAFK, and ESKV…SATK. The segment covering 349 to 359 has biased composition (acidic residues); sequence SLDDAMGDSDD. The segment covering 853 to 877 has biased composition (polar residues); sequence KVQNPPASIQTSENTEAVMKSSATK. Residues 900-907 carry the Nuclear localization signal motif; that stretch reads TKKDKSDD. The tract at residues 919 to 953 is disordered; the sequence is KNPVNNVNKEDKGQEKEVNQGEARRSSNPFLKSTV. Positions 926-943 are enriched in basic and acidic residues; it reads NKEDKGQEKEVNQGEARR. Residues 944 to 953 show a composition bias toward polar residues; it reads SSNPFLKSTV.

In terms of assembly, interacts with EZA1/SWN, LHP1, SLD5 and CLF in the nucleus. In terms of tissue distribution, expressed in root meristematic zones, initiating lateral roots, young leaves and the shoot apex.

It localises to the nucleus. Functionally, participates in maintaining the H3K27me3 mark at target genes by interacting with LHP1-PRC2 complexes during replication, thus contributing to H3K27me3 inheritance. This chain is Protein ENHANCER OF LHP1 1, found in Arabidopsis thaliana (Mouse-ear cress).